The sequence spans 432 residues: Alpha-galactosidase (432 aa).

2–68 (KKITFIGAGS…PSVAINSYDD (67 aa)) lines the NAD(+) pocket. Asn148 lines the substrate pocket. Residue Cys169 coordinates Mn(2+). His170 functions as the Proton donor in the catalytic mechanism. Residue His199 coordinates Mn(2+).

This sequence belongs to the glycosyl hydrolase 4 family. As to quaternary structure, homodimer. The cofactor is Mn(2+). Requires NAD(+) as cofactor.

It localises to the cytoplasm. It carries out the reaction Hydrolysis of terminal, non-reducing alpha-D-galactose residues in alpha-D-galactosides, including galactose oligosaccharides, galactomannans and galactolipids.. Its function is as follows. Catalyzes the hydrolysis of melibiose and alpha-galactosides of the raffinose family of oligosaccharides (RFOs) such as raffinose and stachyose. Cannot act on polymeric substrates such as locust bean gum. The chain is Alpha-galactosidase from Bacillus subtilis (strain 168).